A 143-amino-acid polypeptide reads, in one-letter code: UPF0201 protein PAE1632 (143 aa).

This sequence belongs to the UPF0201 family.

The sequence is that of UPF0201 protein PAE1632 from Pyrobaculum aerophilum (strain ATCC 51768 / DSM 7523 / JCM 9630 / CIP 104966 / NBRC 100827 / IM2).